The following is a 185-amino-acid chain: Celestoxin (185 aa).

The N-terminal stretch at 1–20 (MKFIAAVLLVALLCPKDSTS) is a signal peptide. The propeptide occupies 21–148 (LASRLSGLLG…GLPVALPVSV (128 aa)).

In terms of tissue distribution, expressed by the mandibular venom gland.

Its subcellular location is the secreted. In terms of biological role, has a hypotensive activity. The polypeptide is Celestoxin (Caribicus warreni (Haitian giant galliwasp)).